Reading from the N-terminus, the 612-residue chain is Glutamine--fructose-6-phosphate aminotransferase [isomerizing] (612 aa).

Catalysis depends on C2, which acts as the Nucleophile; for GATase activity. The Glutamine amidotransferase type-2 domain occupies 2–220 (CGIVGAIRAH…DGDIALLASD (219 aa)). 2 consecutive SIS domains span residues 288 to 428 (AKSV…VRGL) and 461 to 602 (WAQQ…VDKP). The active-site For Fru-6P isomerization activity is K607.

In terms of assembly, homodimer.

Its subcellular location is the cytoplasm. The catalysed reaction is D-fructose 6-phosphate + L-glutamine = D-glucosamine 6-phosphate + L-glutamate. Its function is as follows. Catalyzes the first step in hexosamine metabolism, converting fructose-6P into glucosamine-6P using glutamine as a nitrogen source. The polypeptide is Glutamine--fructose-6-phosphate aminotransferase [isomerizing] (Neisseria meningitidis serogroup B (strain ATCC BAA-335 / MC58)).